The primary structure comprises 121 residues: NAD(P)H-quinone oxidoreductase subunit M (121 aa).

The protein belongs to the complex I NdhM subunit family. In terms of assembly, NDH-1 can be composed of about 15 different subunits; different subcomplexes with different compositions have been identified which probably have different functions.

The protein localises to the cellular thylakoid membrane. The enzyme catalyses a plastoquinone + NADH + (n+1) H(+)(in) = a plastoquinol + NAD(+) + n H(+)(out). It catalyses the reaction a plastoquinone + NADPH + (n+1) H(+)(in) = a plastoquinol + NADP(+) + n H(+)(out). In terms of biological role, NDH-1 shuttles electrons from an unknown electron donor, via FMN and iron-sulfur (Fe-S) centers, to quinones in the respiratory and/or the photosynthetic chain. The immediate electron acceptor for the enzyme in this species is believed to be plastoquinone. Couples the redox reaction to proton translocation, and thus conserves the redox energy in a proton gradient. Cyanobacterial NDH-1 also plays a role in inorganic carbon-concentration. The protein is NAD(P)H-quinone oxidoreductase subunit M of Synechococcus sp. (strain JA-2-3B'a(2-13)) (Cyanobacteria bacterium Yellowstone B-Prime).